Consider the following 24-residue polypeptide: Brevinin-1GRa (24 aa).

Expressed by the skin glands.

It is found in the secreted. Its function is as follows. Antimicrobial peptide active against the Gram-positive bacterium S.aureus (MIC=12.5 uM) and against the Gram-negative bacteria E.coli (MIC=25 uM). The protein is Brevinin-1GRa of Odorrana grahami (Yunnanfu frog).